A 443-amino-acid polypeptide reads, in one-letter code: Phosphoglucosamine mutase (443 aa).

The Phosphoserine intermediate role is filled by S101. Mg(2+) contacts are provided by S101, D239, D241, and D243. A Phosphoserine modification is found at S101.

It belongs to the phosphohexose mutase family. Requires Mg(2+) as cofactor. Activated by phosphorylation.

It carries out the reaction alpha-D-glucosamine 1-phosphate = D-glucosamine 6-phosphate. Functionally, catalyzes the conversion of glucosamine-6-phosphate to glucosamine-1-phosphate. This chain is Phosphoglucosamine mutase, found in Francisella tularensis subsp. holarctica (strain FTNF002-00 / FTA).